The following is a 142-amino-acid chain: Small ribosomal subunit protein uS12 (142 aa).

This sequence belongs to the universal ribosomal protein uS12 family. In terms of assembly, part of the 30S ribosomal subunit.

Functionally, with S4 and S5 plays an important role in translational accuracy. Located at the interface of the 30S and 50S subunits. The protein is Small ribosomal subunit protein uS12 of Methanococcoides burtonii (strain DSM 6242 / NBRC 107633 / OCM 468 / ACE-M).